Consider the following 351-residue polypeptide: Transmembrane protein 255A (351 aa).

A run of 4 helical transmembrane segments spans residues 30–50 (IYVT…GLAA), 57–77 (VTVG…LGII), 89–109 (LVAS…CAIV), and 226–246 (TILN…LGGF). The disordered stretch occupies residues 302–331 (FPSSPPSGLSDEQEPQSPSPSPSYMWSSSA).

This sequence belongs to the TMEM255 family.

The protein resides in the membrane. The protein is Transmembrane protein 255A (Tmem255a) of Mus musculus (Mouse).